The chain runs to 501 residues: Pyruvate kinase (501 aa).

Position 50 (Arg50) interacts with substrate. Residues Asn52, Ser54, Asp85, and Thr86 each coordinate K(+). 52-55 lines the ATP pocket; that stretch reads NFSH. ATP contacts are provided by Arg92 and Lys178. A Mg(2+)-binding site is contributed by Glu243. Gly266, Asp267, and Thr299 together coordinate substrate. Asp267 is a Mg(2+) binding site.

It belongs to the pyruvate kinase family. As to quaternary structure, homotetramer. Mg(2+) is required as a cofactor. It depends on K(+) as a cofactor.

It carries out the reaction pyruvate + ATP = phosphoenolpyruvate + ADP + H(+). It participates in carbohydrate degradation; glycolysis; pyruvate from D-glyceraldehyde 3-phosphate: step 5/5. The chain is Pyruvate kinase (PYK1) from Lachancea kluyveri (strain ATCC 58438 / CBS 3082 / BCRC 21498 / NBRC 1685 / JCM 7257 / NCYC 543 / NRRL Y-12651) (Yeast).